Consider the following 373-residue polypeptide: MEDSNMLPQFIHGILSTSHSLFPRSIQELDEGATTPYDYDDGEPCHKTSVKQIGAWILPPLYSLVFIFGFVGNMLVIIILISCKKLKSMTDIYLFNLAISDLLFLLTLPFWAHYAANEWVFGNIMCKLFTGLYHIGYFGGIFFIILLTIDRYLAIVHAVFALKARTVTFGVITSVVTWVVAVFASLPGIIFTKSEQEDDQHTCGPYFPTIWKNFQTIMRNILSLILPLLVMVICYSGILHTLFRCRNEKKRHRAVRLIFAIMIVYFLFWTPYNIVLFLTTFQEFLGMSNCVVDMHLDQAMQVTETLGMTHCCVNPIIYAFVGEKFRRYLSIFFRKHIAKNLCKQCPVFYRETADRVSSTFTPSTGEQEVSVGL.

At 1-60 the chain is on the extracellular side; the sequence is MEDSNMLPQFIHGILSTSHSLFPRSIQELDEGATTPYDYDDGEPCHKTSVKQIGAWILPP. A helical transmembrane segment spans residues 61–81; the sequence is LYSLVFIFGFVGNMLVIIILI. The Cytoplasmic segment spans residues 82–91; it reads SCKKLKSMTD. The chain crosses the membrane as a helical span at residues 92 to 112; that stretch reads IYLFNLAISDLLFLLTLPFWA. Residues 113 to 128 are Extracellular-facing; the sequence is HYAANEWVFGNIMCKL. Cys126 and Cys203 are oxidised to a cystine. A helical transmembrane segment spans residues 129-149; sequence FTGLYHIGYFGGIFFIILLTI. Residues 150 to 170 are Cytoplasmic-facing; the sequence is DRYLAIVHAVFALKARTVTFG. Position 152 is a phosphotyrosine; by JAK2 (Tyr152). Residues 171-191 form a helical membrane-spanning segment; that stretch reads VITSVVTWVVAVFASLPGIIF. At 192-220 the chain is on the extracellular side; it reads TKSEQEDDQHTCGPYFPTIWKNFQTIMRN. Residues 221–241 form a helical membrane-spanning segment; it reads ILSLILPLLVMVICYSGILHT. At 242-256 the chain is on the cytoplasmic side; that stretch reads LFRCRNEKKRHRAVR. The helical transmembrane segment at 257–277 threads the bilayer; sequence LIFAIMIVYFLFWTPYNIVLF. Residues 278–301 lie on the Extracellular side of the membrane; that stretch reads LTTFQEFLGMSNCVVDMHLDQAMQ. The helical transmembrane segment at 302–322 threads the bilayer; sequence VTETLGMTHCCVNPIIYAFVG. The Cytoplasmic portion of the chain corresponds to 323 to 373; that stretch reads EKFRRYLSIFFRKHIAKNLCKQCPVFYRETADRVSSTFTPSTGEQEVSVGL.

The protein belongs to the G-protein coupled receptor 1 family. In terms of assembly, interacts with ARRB1. Interacts (via extracellular N-terminal region) with beta-defensin DEFB106A/DEFB106B; this interaction may preferentially require specific tyrosine sulfation on CCR2. Interacts with NUP85; the interaction is required for CCR2 clusters formation on the cell membrane and CCR2 signaling. Post-translationally, N-glycosylated. In terms of processing, sulfation increases the affinity for both monomeric and dimeric CCL2 with stronger binding to the monomeric form. Binding of sulfated CCR2 to CCL2 promotes conversion of CCL2 from dimer to monomer. Expressed in lung, spleen, kidney, thymus and macrophages.

It localises to the cell membrane. In terms of biological role, key functional receptor for CCL2 but can also bind CCL7 and CCL12. Its binding with CCL2 on monocytes and macrophages mediates chemotaxis and migration induction through the activation of the PI3K cascade, the small G protein Rac and lamellipodium protrusion. Also acts as a receptor for the beta-defensin DEFB106A/DEFB106B. Regulates the expression of T-cell inflammatory cytokines and T-cell differentiation, promoting the differentiation of T-cells into T-helper 17 cells (Th17) during inflammation. Facilitates the export of mature thymocytes by enhancing directional movement of thymocytes to sphingosine-1-phosphate stimulation and up-regulation of S1P1R expression; signals through the JAK-STAT pathway to regulate FOXO1 activity leading to an increased expression of S1P1R. Plays an important role in mediating peripheral nerve injury-induced neuropathic pain. Increases NMDA-mediated synaptic transmission in both dopamine D1 and D2 receptor-containing neurons, which may be caused by MAPK/ERK-dependent phosphorylation of GRIN2B/NMDAR2B. Mediates the recruitment of macrophages and monocytes to the injury site following brain injury. The polypeptide is C-C chemokine receptor type 2 (Ccr2) (Rattus norvegicus (Rat)).